The primary structure comprises 232 residues: Ubiquinone biosynthesis O-methyltransferase (232 aa).

Residues Arg-36, Gly-55, Asp-76, and Leu-120 each coordinate S-adenosyl-L-methionine.

It belongs to the methyltransferase superfamily. UbiG/COQ3 family.

It catalyses the reaction a 3-demethylubiquinol + S-adenosyl-L-methionine = a ubiquinol + S-adenosyl-L-homocysteine + H(+). The catalysed reaction is a 3-(all-trans-polyprenyl)benzene-1,2-diol + S-adenosyl-L-methionine = a 2-methoxy-6-(all-trans-polyprenyl)phenol + S-adenosyl-L-homocysteine + H(+). It functions in the pathway cofactor biosynthesis; ubiquinone biosynthesis. O-methyltransferase that catalyzes the 2 O-methylation steps in the ubiquinone biosynthetic pathway. This is Ubiquinone biosynthesis O-methyltransferase from Pseudomonas fluorescens (strain Pf0-1).